The primary structure comprises 233 residues: Snake venom serine protease ussurase (233 aa).

The 224-residue stretch at 1 to 224 folds into the Peptidase S1 domain; the sequence is VIGGVECNIN…YTDWIQSIIS (224 aa). 6 cysteine pairs are disulfide-bonded: cysteine 7–cysteine 138, cysteine 25–cysteine 41, cysteine 73–cysteine 231, cysteine 117–cysteine 185, cysteine 149–cysteine 164, and cysteine 175–cysteine 200. Histidine 40 (charge relay system) is an active-site residue. Asparagine 54 carries N-linked (GlcNAc...) asparagine glycosylation. Aspartate 85 functions as the Charge relay system in the catalytic mechanism. The active-site Charge relay system is the serine 179.

Belongs to the peptidase S1 family. Snake venom subfamily. As to quaternary structure, monomer. Expressed by the venom gland.

It is found in the secreted. Functionally, snake venom serine protease that may act in the hemostasis system of the prey. This Gloydius ussuriensis (Ussuri mamushi) protein is Snake venom serine protease ussurase.